The primary structure comprises 563 residues: Arginine--tRNA ligase (563 aa).

The 'HIGH' region signature appears at 123-133 (PNIAKDMHVGH).

Belongs to the class-I aminoacyl-tRNA synthetase family. In terms of assembly, monomer.

The protein localises to the cytoplasm. The catalysed reaction is tRNA(Arg) + L-arginine + ATP = L-arginyl-tRNA(Arg) + AMP + diphosphate. The chain is Arginine--tRNA ligase from Chlamydia trachomatis serovar A (strain ATCC VR-571B / DSM 19440 / HAR-13).